We begin with the raw amino-acid sequence, 63 residues long: Large ribosomal subunit protein uL29 (63 aa).

This sequence belongs to the universal ribosomal protein uL29 family.

In Histophilus somni (strain 129Pt) (Haemophilus somnus), this protein is Large ribosomal subunit protein uL29.